A 279-amino-acid polypeptide reads, in one-letter code: Thioredoxin-like 1-1, chloroplastic (279 aa).

A Thioredoxin domain is found at 56-202; that stretch reads ALTERKARPL…FKDALAKHGP (147 aa). Catalysis depends on nucleophile residues C125 and C128. A disulfide bridge connects residues C125 and C128.

This sequence belongs to the thioredoxin family.

Its function is as follows. Probable thiol-disulfide oxidoreductase that may participate in various redox reactions. This chain is Thioredoxin-like 1-1, chloroplastic, found in Oryza sativa subsp. japonica (Rice).